Here is a 669-residue protein sequence, read N- to C-terminus: Dymeclin (669 aa).

Gly2 carries the N-myristoyl glycine lipid modification.

It belongs to the dymeclin family. As to quaternary structure, interacts with GOLM1 and PPIB. Post-translationally, myristoylated in vitro; myristoylation is not essential for protein targeting to Golgi compartment. In terms of tissue distribution, expressed in most embryo-fetal and adult tissues. Abundant in primary chondrocytes, osteoblasts, cerebellum, kidney, lung, stomach, heart, pancreas and fetal brain. Very low or no expression in the spleen, thymus, esophagus, bladder and thyroid gland.

Its subcellular location is the cytoplasm. It localises to the golgi apparatus. The protein resides in the membrane. Necessary for correct organization of Golgi apparatus. Involved in bone development. This chain is Dymeclin (DYM), found in Homo sapiens (Human).